We begin with the raw amino-acid sequence, 26 residues long: Melittin (26 aa).

Glycine 1 carries the post-translational modification N-formylglycine; partial. Glutamine 26 is modified (glutamine amide).

Belongs to the melittin family. Monomer (in solution and for integration into membranes), homotetramer (in solution and potentially as a toroidal pore in membranes), and potenially homomultimer (as a toroidal pore in membranes). As to expression, expressed by the venom gland.

It localises to the secreted. The protein resides in the target cell membrane. Functionally, main toxin of bee venom with strong hemolytic activity and antimicrobial activity. It has enhancing effects on bee venom phospholipase A2 activity. This amphipathic toxin binds to negatively charged membrane surface and forms pore by inserting into lipid bilayers inducing the leakage of ions and molecules and the enhancement of permeability that ultimately leads to cell lysis. It acts as a voltage-gated pore with higher selectivity for anions over cations. The ion conductance has been shown to be voltage-dependent. Self-association of melittin in membranes is promoted by high ionic strength, but not by the presence of negatively charged lipids. In vivo, intradermal injection into healthy human volunteers produce sharp pain sensation and an inflammatory response. It produces pain by activating primary nociceptor cells directly and indirectly due to its ability to activate plasma membrane phospholipase A2 and its pore-forming activity. This is Melittin (MELT) from Apis florea (Dwarf honeybee).